Consider the following 243-residue polypeptide: uncharacterized protein (243 aa).

Residues Cys-120 and Cys-157 each contribute to the [4Fe-4S] cluster site.

In terms of assembly, homodimer. It depends on [4Fe-4S] cluster as a cofactor.

This is an uncharacterized protein from Methanocaldococcus jannaschii (strain ATCC 43067 / DSM 2661 / JAL-1 / JCM 10045 / NBRC 100440) (Methanococcus jannaschii).